The sequence spans 350 residues: Chlorophyll a/b light-harvesting protein PcbA (350 aa).

6 helical membrane passes run 26–46 (LSAH…ITLF), 62–82 (LILI…GQVV), 87–107 (YFVI…GALY), 214–234 (IAVV…FPWA), 248–268 (LSAS…FSAV), and 309–329 (LCNV…WHAL).

Belongs to the PsbB/PsbC family. IsiA/Pcb subfamily. As to quaternary structure, the antenna complex consists of chlorophylls (a and b) and chlorophyll a/b binding proteins. The cofactor is chlorophyll a. Requires chlorophyll b as cofactor.

It is found in the cellular thylakoid membrane. The antenna complex functions as a light receptor, it captures and delivers excitation energy to photosystems II and I. The Prochlorales pcb genes are not related to higher plant LHCs. This is Chlorophyll a/b light-harvesting protein PcbA (pcbA) from Prochlorothrix hollandica.